A 401-amino-acid chain; its full sequence is Argininosuccinate synthase (401 aa).

ATP contacts are provided by residues 8–16 (AYSGGLDTS) and alanine 35. Positions 86 and 91 each coordinate L-citrulline. ATP is bound at residue glycine 116. Threonine 118, asparagine 122, and aspartate 123 together coordinate L-aspartate. Asparagine 122 is a binding site for L-citrulline. L-citrulline is bound by residues arginine 126, serine 175, serine 184, glutamate 260, and tyrosine 272.

Belongs to the argininosuccinate synthase family. Type 1 subfamily. As to quaternary structure, homotetramer.

The protein localises to the cytoplasm. The catalysed reaction is L-citrulline + L-aspartate + ATP = 2-(N(omega)-L-arginino)succinate + AMP + diphosphate + H(+). It participates in amino-acid biosynthesis; L-arginine biosynthesis; L-arginine from L-ornithine and carbamoyl phosphate: step 2/3. This chain is Argininosuccinate synthase, found in Carboxydothermus hydrogenoformans (strain ATCC BAA-161 / DSM 6008 / Z-2901).